We begin with the raw amino-acid sequence, 347 residues long: tRNA pseudouridine synthase D (347 aa).

Asp81 (nucleophile) is an active-site residue. One can recognise a TRUD domain in the interval 158–305 (GVPNYFGSQR…RHDRRDIALK (148 aa)).

It belongs to the pseudouridine synthase TruD family.

It catalyses the reaction uridine(13) in tRNA = pseudouridine(13) in tRNA. Functionally, responsible for synthesis of pseudouridine from uracil-13 in transfer RNAs. The polypeptide is tRNA pseudouridine synthase D (Vibrio campbellii (strain ATCC BAA-1116)).